A 160-amino-acid polypeptide reads, in one-letter code: 2-C-methyl-D-erythritol 2,4-cyclodiphosphate synthase (160 aa).

2 residues coordinate a divalent metal cation: Asp11 and His13. Residues 11–13 and 37–38 each bind 4-CDP-2-C-methyl-D-erythritol 2-phosphate; these read DIH and HS. Position 45 (His45) interacts with a divalent metal cation. 4-CDP-2-C-methyl-D-erythritol 2-phosphate is bound by residues 59–61, 135–138, and Arg145; these read DIG and TTNE.

This sequence belongs to the IspF family. In terms of assembly, homotrimer. Requires a divalent metal cation as cofactor.

The enzyme catalyses 4-CDP-2-C-methyl-D-erythritol 2-phosphate = 2-C-methyl-D-erythritol 2,4-cyclic diphosphate + CMP. It participates in isoprenoid biosynthesis; isopentenyl diphosphate biosynthesis via DXP pathway; isopentenyl diphosphate from 1-deoxy-D-xylulose 5-phosphate: step 4/6. Functionally, involved in the biosynthesis of isopentenyl diphosphate (IPP) and dimethylallyl diphosphate (DMAPP), two major building blocks of isoprenoid compounds. Catalyzes the conversion of 4-diphosphocytidyl-2-C-methyl-D-erythritol 2-phosphate (CDP-ME2P) to 2-C-methyl-D-erythritol 2,4-cyclodiphosphate (ME-CPP) with a corresponding release of cytidine 5-monophosphate (CMP). The polypeptide is 2-C-methyl-D-erythritol 2,4-cyclodiphosphate synthase (Nostoc punctiforme (strain ATCC 29133 / PCC 73102)).